A 307-amino-acid chain; its full sequence is Ornithine carbamoyltransferase (307 aa).

Carbamoyl phosphate-binding positions include 55 to 58 (STRT), Q82, R106, and 133 to 136 (HPCQ). Residues N164, D224, and 228 to 229 (SM) each bind L-ornithine. Carbamoyl phosphate is bound by residues 263 to 264 (CL) and R291.

This sequence belongs to the aspartate/ornithine carbamoyltransferase superfamily. OTCase family.

It localises to the cytoplasm. The enzyme catalyses carbamoyl phosphate + L-ornithine = L-citrulline + phosphate + H(+). Its pathway is amino-acid biosynthesis; L-arginine biosynthesis; L-arginine from L-ornithine and carbamoyl phosphate: step 1/3. In terms of biological role, reversibly catalyzes the transfer of the carbamoyl group from carbamoyl phosphate (CP) to the N(epsilon) atom of ornithine (ORN) to produce L-citrulline. The chain is Ornithine carbamoyltransferase from Bradyrhizobium diazoefficiens (strain JCM 10833 / BCRC 13528 / IAM 13628 / NBRC 14792 / USDA 110).